Consider the following 145-residue polypeptide: Large ribosomal subunit protein uL16 (145 aa).

This sequence belongs to the universal ribosomal protein uL16 family. As to quaternary structure, part of the 50S ribosomal subunit.

Functionally, binds 23S rRNA and is also seen to make contacts with the A and possibly P site tRNAs. The protein is Large ribosomal subunit protein uL16 of Desulfitobacterium hafniense (strain DSM 10664 / DCB-2).